The primary structure comprises 517 residues: Maturase K (517 aa).

This sequence belongs to the intron maturase 2 family. MatK subfamily.

It is found in the plastid. It localises to the chloroplast. Its function is as follows. Usually encoded in the trnK tRNA gene intron. Probably assists in splicing its own and other chloroplast group II introns. The chain is Maturase K from Trillium maculatum (Spotted wakerobin).